A 526-amino-acid polypeptide reads, in one-letter code: Cytochrome P450 monooxygenase 226 (526 aa).

Residues 15–35 traverse the membrane as a helical segment; sequence FATSYAALTVAAVTLLAALLV. 3 N-linked (GlcNAc...) asparagine glycosylation sites follow: Asn219, Asn277, and Asn320. Cys452 contacts heme.

This sequence belongs to the cytochrome P450 family. Requires heme as cofactor.

The protein resides in the membrane. The protein operates within secondary metabolite biosynthesis. In terms of biological role, cytochrome P450 monooxygenase that is able to use anthracene, carbazole and phenanthrene as substrates for oxidation. These multifunctional properties against a series of polycyclic aromatic hydrocarbons (PAHs) suggest that CYP226 would play important roles, at least in part, in fungal metabolic systems involved in xenobiotic detoxification. The polypeptide is Cytochrome P450 monooxygenase 226 (Postia placenta (strain ATCC 44394 / Madison 698-R) (Brown rot fungus)).